A 261-amino-acid polypeptide reads, in one-letter code: Leucine-rich repeat-containing protein 18 (261 aa).

LRR repeat units lie at residues 28-49, 51-72, 74-95, 97-118, 122-144, 145-167, and 168-189; these read GKKR…ILRL, DMDE…ISKF, NLRW…IGQM, SLLY…VELK, NIRA…GALK, ELHE…SKLP, and KLKK…EIFI.

It localises to the cytoplasm. Its function is as follows. May be involved in the regulation of spermatogenesis and sperm maturation. This chain is Leucine-rich repeat-containing protein 18 (LRRC18), found in Homo sapiens (Human).